The following is an 83-amino-acid chain: Large ribosomal subunit protein bL27c (83 aa).

Residues 1–21 (MAHKKGAGSTKNGRDSNAKRL) form a disordered region.

The protein belongs to the bacterial ribosomal protein bL27 family.

Its subcellular location is the plastid. It localises to the chloroplast. This Phaeodactylum tricornutum (strain CCAP 1055/1) protein is Large ribosomal subunit protein bL27c.